A 228-amino-acid chain; its full sequence is Translation initiation factor 6 (228 aa).

This sequence belongs to the eIF-6 family.

Its function is as follows. Binds to the 50S ribosomal subunit and prevents its association with the 30S ribosomal subunit to form the 70S initiation complex. This Thermococcus gammatolerans (strain DSM 15229 / JCM 11827 / EJ3) protein is Translation initiation factor 6.